The following is an 81-amino-acid chain: Delta-conotoxin-like Ac6.3 (81 aa).

The signal sequence occupies residues 1-22; it reads MKLTCVMIVAVLFLTAWTFVTA. The propeptide occupies 23–51; sequence DDSRNGLENLSPKARHEMKNPEASKSNKR. 3 cysteine pairs are disulfide-bonded: Cys54/Cys69, Cys61/Cys73, and Cys68/Cys78.

It belongs to the conotoxin O1 superfamily. As to expression, expressed by the venom duct.

The protein localises to the secreted. Its function is as follows. Delta-conotoxins bind to site 6 of voltage-gated sodium channels (Nav) and inhibit the inactivation process. The polypeptide is Delta-conotoxin-like Ac6.3 (Conus achatinus (Little frog cone)).